Here is a 652-residue protein sequence, read N- to C-terminus: Chaperone protein HtpG (652 aa).

The tract at residues 1–348 is a; substrate-binding; that stretch reads MATDAHKETL…SDDLPLNVSR (348 aa). The interval 349–565 is b; it reads ELLQHNPLLD…EYDFGMGMQR (217 aa). Residues 566–652 are c; the sequence is LLKAAGHAMP…EAKSNAARGD (87 aa).

Belongs to the heat shock protein 90 family. As to quaternary structure, homodimer.

It is found in the cytoplasm. Functionally, molecular chaperone. Has ATPase activity. The polypeptide is Chaperone protein HtpG (Alkalilimnicola ehrlichii (strain ATCC BAA-1101 / DSM 17681 / MLHE-1)).